We begin with the raw amino-acid sequence, 208 residues long: Ribosomal RNA large subunit methyltransferase E (208 aa).

Positions 61, 63, 81, 97, and 122 each coordinate S-adenosyl-L-methionine. K162 acts as the Proton acceptor in catalysis.

This sequence belongs to the class I-like SAM-binding methyltransferase superfamily. RNA methyltransferase RlmE family.

The protein resides in the cytoplasm. It catalyses the reaction uridine(2552) in 23S rRNA + S-adenosyl-L-methionine = 2'-O-methyluridine(2552) in 23S rRNA + S-adenosyl-L-homocysteine + H(+). Its function is as follows. Specifically methylates the uridine in position 2552 of 23S rRNA at the 2'-O position of the ribose in the fully assembled 50S ribosomal subunit. This Pseudomonas entomophila (strain L48) protein is Ribosomal RNA large subunit methyltransferase E.